The primary structure comprises 384 residues: MKMEPDEVSSLRKHRFVGTDNSILGRYVLHHYTNWMLEKIPAFVAPNMLTLCGLIAMVASLALTLAFDPCLCSPPAFLSLANFLLMFVYFTCDNLDGAQARKTGSGSSLGQLFDHGVDSCCALITSIALSSTFGFGLSPKFLIFTLAVMVQFYLAGIEEKFTGRFVLGRISGASEGVVFAMGAHLATFLCGKRLFRHLFSDNFLWPVKKIYSSILGTDNFSAVSVIIGTALVFNTASTLISIEFKMHFPRRLLLYSTILRVMSFVTSFVILHNTLSTESLWIRHLNILMFGQIFSIKYVNEVCSYIIRRDPFLFTPPYLMYLTVSAVLQLQYLKEFRETLVAISFLLSSMYYLLVALRIIITFKEALGISFLSITTSDKSKAGG.

This sequence belongs to the CDP-alcohol phosphatidyltransferase class-I family.

Its subcellular location is the membrane. The catalysed reaction is a CDP-1,2-diacyl-sn-glycerol + L-serine = a 1,2-diacyl-sn-glycero-3-phospho-L-serine + CMP + H(+). Its pathway is phospholipid metabolism; phosphatidylethanolamine biosynthesis; phosphatidylethanolamine from CDP-diacylglycerol: step 1/2. The sequence is that of CDP-diacylglycerol--serine O-phosphatidyltransferase (PSS) from Encephalitozoon cuniculi (strain GB-M1) (Microsporidian parasite).